Reading from the N-terminus, the 141-residue chain is Nucleoside triphosphatase NudI (141 aa).

Positions 1 to 141 (MRQRTIVCPI…RLTFTQKGLL (141 aa)) constitute a Nudix hydrolase domain. A Nudix box motif is present at residues 38-59 (GGMEPGETMEEALRREIREELG).

It belongs to the Nudix hydrolase family. NudI subfamily. As to quaternary structure, monomer. It depends on Mg(2+) as a cofactor.

The catalysed reaction is a ribonucleoside 5'-triphosphate + H2O = a ribonucleoside 5'-phosphate + diphosphate + H(+). The enzyme catalyses a 2'-deoxyribonucleoside 5'-triphosphate + H2O = a 2'-deoxyribonucleoside 5'-phosphate + diphosphate + H(+). It carries out the reaction dUTP + H2O = dUMP + diphosphate + H(+). It catalyses the reaction dTTP + H2O = dTMP + diphosphate + H(+). The catalysed reaction is dCTP + H2O = dCMP + diphosphate + H(+). In terms of biological role, catalyzes the hydrolysis of nucleoside triphosphates, with a preference for pyrimidine deoxynucleoside triphosphates (dUTP, dTTP and dCTP). The protein is Nucleoside triphosphatase NudI of Enterobacter sp. (strain 638).